A 360-amino-acid polypeptide reads, in one-letter code: Ribosomal RNA large subunit methyltransferase F (360 aa).

The disordered stretch occupies residues 1–36; the sequence is MSKLISKQGKRPALSQSGLAKPSTSKKSSASKNANT. Low complexity predominate over residues 23-36; that stretch reads STSKKSSASKNANT.

The protein belongs to the methyltransferase superfamily. METTL16/RlmF family.

It is found in the cytoplasm. The catalysed reaction is adenosine(1618) in 23S rRNA + S-adenosyl-L-methionine = N(6)-methyladenosine(1618) in 23S rRNA + S-adenosyl-L-homocysteine + H(+). In terms of biological role, specifically methylates the adenine in position 1618 of 23S rRNA. The sequence is that of Ribosomal RNA large subunit methyltransferase F from Shewanella denitrificans (strain OS217 / ATCC BAA-1090 / DSM 15013).